The chain runs to 503 residues: Sarpagan bridge enzyme 1 (503 aa).

A helical; Signal-anchor for type II membrane protein transmembrane segment spans residues Ile3–Thr23. Cys442 serves as a coordination point for heme.

It belongs to the cytochrome P450 family. Heme is required as a cofactor. In terms of tissue distribution, highly expressed in roots. Expressed at low levels in leaves, stems and flowers.

Its subcellular location is the endoplasmic reticulum membrane. The catalysed reaction is (19E)-geissoschizine + reduced [NADPH--hemoprotein reductase] + O2 = polyneuridine aldehyde + oxidized [NADPH--hemoprotein reductase] + 2 H2O + H(+). It carries out the reaction tetrahydroalstonine + A + reduced [NADPH--hemoprotein reductase] + O2 = alstonine + AH2 + oxidized [NADPH--hemoprotein reductase] + 2 H2O + H(+). The enzyme catalyses ajmalicine + A + reduced [NADPH--hemoprotein reductase] + O2 = serpentine + AH2 + oxidized [NADPH--hemoprotein reductase] + 2 H2O + H(+). Its pathway is alkaloid biosynthesis; ajmaline biosynthesis. Its function is as follows. Monooxygenase involved in the biosynthesis of ajmaline-type monoterpenoid indole alkaloids (MIAs) natural products, important plant-derived pharmaceuticals used in the therapy of heart disorders. Converts by cyclization the strictosidine-derived geissoschizine to the sarpagan alkaloid polyneuridine aldehyde, precursor of vomilenine, an intermediate chemical in the biosynthesis of ajmaline. Converts by aromatization the tetrahydro-beta-carboline alkaloids tetrahydroalstonine and ajmalicine to the corresponding beta-carboline alkaloids alstonine and serpentine, respectively. The protein is Sarpagan bridge enzyme 1 of Rauvolfia serpentina (Serpentine wood).